The primary structure comprises 480 residues: Bifunctional protein HldE (480 aa).

A ribokinase region spans residues 1–316 (MNMHDFSKTK…EQLNASMRHQ (316 aa)). 192–195 (NQGE) serves as a coordination point for ATP. Residue D261 is part of the active site. The tract at residues 342–480 (FTNGCFDLLH…EAEIKEGAAQ (139 aa)) is cytidylyltransferase.

In the N-terminal section; belongs to the carbohydrate kinase PfkB family. The protein in the C-terminal section; belongs to the cytidylyltransferase family. As to quaternary structure, homodimer.

The enzyme catalyses D-glycero-beta-D-manno-heptose 7-phosphate + ATP = D-glycero-beta-D-manno-heptose 1,7-bisphosphate + ADP + H(+). It carries out the reaction D-glycero-beta-D-manno-heptose 1-phosphate + ATP + H(+) = ADP-D-glycero-beta-D-manno-heptose + diphosphate. It participates in nucleotide-sugar biosynthesis; ADP-L-glycero-beta-D-manno-heptose biosynthesis; ADP-L-glycero-beta-D-manno-heptose from D-glycero-beta-D-manno-heptose 7-phosphate: step 1/4. Its pathway is nucleotide-sugar biosynthesis; ADP-L-glycero-beta-D-manno-heptose biosynthesis; ADP-L-glycero-beta-D-manno-heptose from D-glycero-beta-D-manno-heptose 7-phosphate: step 3/4. Its function is as follows. Catalyzes the phosphorylation of D-glycero-D-manno-heptose 7-phosphate at the C-1 position to selectively form D-glycero-beta-D-manno-heptose-1,7-bisphosphate. Catalyzes the ADP transfer from ATP to D-glycero-beta-D-manno-heptose 1-phosphate, yielding ADP-D-glycero-beta-D-manno-heptose. The sequence is that of Bifunctional protein HldE from Hydrogenovibrio crunogenus (strain DSM 25203 / XCL-2) (Thiomicrospira crunogena).